Here is a 562-residue protein sequence, read N- to C-terminus: Acetolactate synthase isozyme 1 large subunit (562 aa).

Residue Glu60 coordinates thiamine diphosphate. Residues Arg162, 264–285 (HGVR…LGAR), and 307–326 (DIDR…IQAD) each bind FAD. Residues 393–473 (QHQMWTAQAY…VKIILMNNEA (81 aa)) form a thiamine pyrophosphate binding region. Mg(2+) contacts are provided by Asp444 and Asn471.

The protein belongs to the TPP enzyme family. As to quaternary structure, dimer of large and small chains. Requires Mg(2+) as cofactor. Thiamine diphosphate is required as a cofactor.

It catalyses the reaction 2 pyruvate + H(+) = (2S)-2-acetolactate + CO2. Its pathway is amino-acid biosynthesis; L-isoleucine biosynthesis; L-isoleucine from 2-oxobutanoate: step 1/4. It participates in amino-acid biosynthesis; L-valine biosynthesis; L-valine from pyruvate: step 1/4. This Escherichia coli (strain K12) protein is Acetolactate synthase isozyme 1 large subunit (ilvB).